The following is a 396-amino-acid chain: Interleukin enhancer-binding factor 2 homolog (396 aa).

The region spanning 22 to 379 is the DZF domain; it reads KTFVPRHPFD…KKEGDLEEDI (358 aa). The interval 367-396 is disordered; that stretch reads PTDKKEGDLEEDIDMIENENEEEGSDDGAE. Residues 374-396 are compositionally biased toward acidic residues; sequence DLEEDIDMIENENEEEGSDDGAE.

It localises to the nucleus. May regulate transcription of undefined genes. The sequence is that of Interleukin enhancer-binding factor 2 homolog from Drosophila melanogaster (Fruit fly).